The sequence spans 663 residues: MSHQILLLLAMLTLGLAISQRREQVPCRTVNKEALCHGLGLLQVPSVLSLDIQALYLSGNQLQSILVSPLGFYTALRHLDLSDNQISFLQAGVFQALPYLEHLNLAHNRLATGMALNSGGLGRLPLLVSLDLSGNSLHGNLVERLLGETPRLRTLSLAENSLTRLARHTFWGMPAVEQLDLHSNVLMDIEDGAFEALPHLTHLNLSRNSLTCISDFSLQQLQVLDLSCNSIEAFQTAPEPQAQFQLAWLDLRENKLLHFPDLAVFPRLIYLNVSNNLIQLPAGLPRGSEDLHAPSEGWSASPLSNPSRNASTHPLSQLLNLDLSYNEIELVPASFLEHLTSLRFLNLSRNCLRSFEARQVDSLPCLVLLDLSHNVLEALELGTKVLGSLQTLLLQDNALQELPPYTFASLASLQRLNLQGNQVSPCGGPAEPGPPGCVDFSGIPTLHVLNMAGNSMGMLRAGSFLHTPLTELDLSTNPGLDVATGALVGLEASLEVLELQGNGLTVLRVDLPCFLRLKRLNLAENQLSHLPAWTRAVSLEVLDLRNNSFSLLPGNAMGGLETSLRRLYLQGNPLSCCGNGWLAAQLHQGRVDVDATQDLICRFGSQEELSLSLVRPEDCEKGGLKNVNLILLLSFTLVSAIVLTTLATICFLRRQKLSQQYKA.

The first 17 residues, Met-1–Ala-17, serve as a signal peptide directing secretion. The Extracellular portion of the chain corresponds to Ile-18–Asn-628. The region spanning Arg-22–Ser-49 is the LRRNT domain. 10 LRR repeats span residues Ser-49–Phe-72, Tyr-73–Ala-96, Pro-98–Arg-123, Pro-125–Glu-148, Thr-149–Gly-172, Pro-174–Ala-196, Leu-197–Gln-220, Gln-222–Gln-241, Gln-243–Arg-267, and Ile-269–Gly-287. A glycan (N-linked (GlcNAc...) asparagine) is linked at Asn-204. Asn-272, Asn-305, and Asn-309 each carry an N-linked (GlcNAc...) asparagine glycan. The interval Leu-291–Ser-311 is disordered. Residues Ser-301–Ser-311 show a composition bias toward polar residues. LRR repeat units follow at residues Leu-315 to His-338, Thr-340 to Ser-362, Leu-363 to Leu-386, Gly-387 to Ser-409, Ala-411 to Gly-433, Ile-443 to His-466, Pro-468 to Gly-489, Glu-491 to Phe-514, Leu-515 to Leu-539, Val-541 to Gly-559, and Glu-561 to Ala-584. Residue Asn-346 is glycosylated (N-linked (GlcNAc...) asparagine). N-linked (GlcNAc...) asparagine glycosylation occurs at Asn-546. In terms of domain architecture, LRRCT spans Asn-572–Lys-621. The chain crosses the membrane as a helical span at residues Leu-629–Ile-649. The Cytoplasmic portion of the chain corresponds to Cys-650–Ala-663.

Belongs to the LRRC32/LRRC33 family. As to quaternary structure, interacts with TGFB1; associates via disulfide bonds with the Latency-associated peptide chain (LAP) regulatory chain of TGFB1, leading to regulate activation of TGF-beta-1. Interacts with TGFB2. Interacts with TGFB3; associates via disulfide bonds with the Latency-associated peptide chain (LAP) regulatory chain of TGFB3, leading to regulate activation of TGF-beta-3. Interacts with LAPTM4B; decreases TGFB1 production in regulatory T-cells. As to expression, present in medial edge epithelial cells at 14.5 dpc (at protein level).

The protein localises to the cell membrane. Its subcellular location is the cell surface. In terms of biological role, key regulator of transforming growth factor beta (TGFB1, TGFB2 and TGFB3) that controls TGF-beta activation by maintaining it in a latent state during storage in extracellular space. Associates specifically via disulfide bonds with the Latency-associated peptide (LAP), which is the regulatory chain of TGF-beta, and regulates integrin-dependent activation of TGF-beta. Able to outcompete LTBP1 for binding to LAP regulatory chain of TGF-beta. Controls activation of TGF-beta-1 (TGFB1) on the surface of activated regulatory T-cells (Tregs). Required for epithelial fusion during palate development by regulating activation of TGF-beta-3 (TGFB3). The chain is Transforming growth factor beta activator LRRC32 from Mus musculus (Mouse).